A 276-amino-acid chain; its full sequence is 2-dehydro-3-deoxyphosphooctonate aldolase (276 aa).

It belongs to the KdsA family.

It is found in the cytoplasm. It carries out the reaction D-arabinose 5-phosphate + phosphoenolpyruvate + H2O = 3-deoxy-alpha-D-manno-2-octulosonate-8-phosphate + phosphate. It participates in carbohydrate biosynthesis; 3-deoxy-D-manno-octulosonate biosynthesis; 3-deoxy-D-manno-octulosonate from D-ribulose 5-phosphate: step 2/3. It functions in the pathway bacterial outer membrane biogenesis; lipopolysaccharide biosynthesis. This chain is 2-dehydro-3-deoxyphosphooctonate aldolase, found in Stenotrophomonas maltophilia (strain R551-3).